Consider the following 64-residue polypeptide: Large ribosomal subunit protein bL35 (64 aa).

It belongs to the bacterial ribosomal protein bL35 family.

In Levilactobacillus brevis (strain ATCC 367 / BCRC 12310 / CIP 105137 / JCM 1170 / LMG 11437 / NCIMB 947 / NCTC 947) (Lactobacillus brevis), this protein is Large ribosomal subunit protein bL35.